Consider the following 106-residue polypeptide: Cuticle protein CP14.6 (106 aa).

The first 16 residues, 1–16 (MKSFFVVALLVAAAAA), serve as a signal peptide directing secretion. In terms of domain architecture, Chitin-binding type R&amp;R spans 37 to 106 (PQHYSYSVET…PQGAHLPVAA (70 aa)).

Its function is as follows. Component of the cuticle of tobacco hornworm. This Manduca sexta (Tobacco hawkmoth) protein is Cuticle protein CP14.6 (CP14.6).